The following is an 81-amino-acid chain: Weak neurotoxin OH-72 (81 aa).

The signal sequence occupies residues 1–16; it reads LTLVVVTIVCLDLGYT. 5 disulfides stabilise this stretch: Cys19–Cys40, Cys22–Cys27, Cys33–Cys58, Cys62–Cys73, and Cys74–Cys79.

It belongs to the three-finger toxin family. Ancestral subfamily. Orphan group II sub-subfamily. In terms of tissue distribution, expressed by the venom gland.

The protein localises to the secreted. Functionally, binds with low affinity to muscular (alpha-1-beta-1-delta-epsilon/CHRNA1-CHRNB1-CHRND-CHRNE) and very low affinity to neuronal (alpha-7/CHRNA7) nicotinic acetylcholine receptor (nAChR). This chain is Weak neurotoxin OH-72, found in Ophiophagus hannah (King cobra).